A 1253-amino-acid chain; its full sequence is Cytoplasmic FMR1-interacting protein 1 (1253 aa).

The residue at position 583 (Ser583) is a Phosphoserine. The tract at residues 724–732 (DKRLRSECK) is EIF4E-binding. Phosphothreonine is present on Thr1234.

Belongs to the CYFIP family. Component of the WAVE1 complex composed of ABI2, CYFIP1 or CYFIP2, BRK1, NCKAP1 and WASF1/WAVE1. Within the complex, a heterodimer containing NCKAP1 and CYFIP1 interacts with a heterotrimer formed by WAVE1, ABI2 and BRK1. Component of the CYFIP1-EIF4E-FMR1 complex which is composed of CYFIP, EIF4E and FMR1. Interacts with FMR1 but does not bind to related proteins FXR1 or FXR2. Interaction with EIF4E stimulates FMR1 binding. Component of the WAVE2 complex composed of ABI1, CYFIP1/SRA1, NCKAP1/NAP1 (NCKAP1L/HEM1 in hematopoietic cells) and WASF2/WAVE2. Interacts with the active GTP-bound form of RAC1. Interacts through its C-terminus with the C-terminus of DPYSL2/CRMP2 which is necessary for DPYSL2-induced axon outgrowth. Interacts with NYAP1, NYAP2 and MYO16. Interacts with TMEM108 (via N-terminus); the interaction associates TMEM108 with the WAVE1 complex. As to expression, highly expressed in embryonic and adult developing nervous system.

The protein localises to the cytoplasm. It localises to the perinuclear region. The protein resides in the cell projection. It is found in the lamellipodium. Its subcellular location is the ruffle. The protein localises to the synapse. It localises to the synaptosome. Functionally, component of the CYFIP1-EIF4E-FMR1 complex which binds to the mRNA cap and mediates translational repression. In the CYFIP1-EIF4E-FMR1 complex this subunit is an adapter between EIF4E and FMR1. Promotes the translation repression activity of FMR1 in brain probably by mediating its association with EIF4E and mRNA. Regulates formation of membrane ruffles and lamellipodia. Plays a role in axon outgrowth. Binds to F-actin but not to RNA. Part of the WAVE complex that regulates actin filament reorganization via its interaction with the Arp2/3 complex. Actin remodeling activity is regulated by RAC1. Regulator of epithelial morphogenesis. May act as an invasion suppressor in cancers. As component of the WAVE1 complex, required for BDNF-NTRK2 endocytic trafficking and signaling from early endosomes. This is Cytoplasmic FMR1-interacting protein 1 from Mus musculus (Mouse).